Consider the following 364-residue polypeptide: Aminomethyltransferase (364 aa).

Belongs to the GcvT family. The glycine cleavage system is composed of four proteins: P, T, L and H.

The enzyme catalyses N(6)-[(R)-S(8)-aminomethyldihydrolipoyl]-L-lysyl-[protein] + (6S)-5,6,7,8-tetrahydrofolate = N(6)-[(R)-dihydrolipoyl]-L-lysyl-[protein] + (6R)-5,10-methylene-5,6,7,8-tetrahydrofolate + NH4(+). Functionally, the glycine cleavage system catalyzes the degradation of glycine. This is Aminomethyltransferase from Shewanella woodyi (strain ATCC 51908 / MS32).